The sequence spans 786 residues: Endonuclease MutS2 (786 aa).

332 to 339 (GPNTGGKT) lines the ATP pocket. In terms of domain architecture, Smr spans 711-786 (IDLRGMDSEE…GTGVTVVILK (76 aa)).

Belongs to the DNA mismatch repair MutS family. MutS2 subfamily. In terms of assembly, homodimer. Binds to stalled ribosomes, contacting rRNA.

In terms of biological role, endonuclease that is involved in the suppression of homologous recombination and thus may have a key role in the control of bacterial genetic diversity. Its function is as follows. Acts as a ribosome collision sensor, splitting the ribosome into its 2 subunits. Detects stalled/collided 70S ribosomes which it binds and splits by an ATP-hydrolysis driven conformational change. Acts upstream of the ribosome quality control system (RQC), a ribosome-associated complex that mediates the extraction of incompletely synthesized nascent chains from stalled ribosomes and their subsequent degradation. Probably generates substrates for RQC. In Clostridium perfringens (strain SM101 / Type A), this protein is Endonuclease MutS2.